Consider the following 88-residue polypeptide: MGFFKGLSSRPTPKQVAKDRLKLILIHDRGEIPTDTLEKIRKEILGVISKYIEIQVDDVEISVNKSEDMEGENTSALIASIPIKSIRR.

Belongs to the MinE family.

Its function is as follows. Prevents the cell division inhibition by proteins MinC and MinD at internal division sites while permitting inhibition at polar sites. This ensures cell division at the proper site by restricting the formation of a division septum at the midpoint of the long axis of the cell. The chain is Cell division topological specificity factor from Clostridium botulinum (strain Alaska E43 / Type E3).